A 208-amino-acid chain; its full sequence is ATP-dependent Clp protease proteolytic subunit (208 aa).

The Nucleophile role is filled by Ser106. Residue His131 is part of the active site.

It belongs to the peptidase S14 family. As to quaternary structure, fourteen ClpP subunits assemble into 2 heptameric rings which stack back to back to give a disk-like structure with a central cavity, resembling the structure of eukaryotic proteasomes.

It is found in the cytoplasm. The enzyme catalyses Hydrolysis of proteins to small peptides in the presence of ATP and magnesium. alpha-casein is the usual test substrate. In the absence of ATP, only oligopeptides shorter than five residues are hydrolyzed (such as succinyl-Leu-Tyr-|-NHMec, and Leu-Tyr-Leu-|-Tyr-Trp, in which cleavage of the -Tyr-|-Leu- and -Tyr-|-Trp bonds also occurs).. Functionally, cleaves peptides in various proteins in a process that requires ATP hydrolysis. Has a chymotrypsin-like activity. Plays a major role in the degradation of misfolded proteins. In Roseobacter denitrificans (strain ATCC 33942 / OCh 114) (Erythrobacter sp. (strain OCh 114)), this protein is ATP-dependent Clp protease proteolytic subunit.